A 463-amino-acid chain; its full sequence is ATP-dependent protease ATPase subunit HslU (463 aa).

ATP is bound by residues Val19, 61 to 66 (GVGKTE), Asp277, Glu341, and Arg413.

The protein belongs to the ClpX chaperone family. HslU subfamily. A double ring-shaped homohexamer of HslV is capped on each side by a ring-shaped HslU homohexamer. The assembly of the HslU/HslV complex is dependent on binding of ATP.

It localises to the cytoplasm. ATPase subunit of a proteasome-like degradation complex; this subunit has chaperone activity. The binding of ATP and its subsequent hydrolysis by HslU are essential for unfolding of protein substrates subsequently hydrolyzed by HslV. HslU recognizes the N-terminal part of its protein substrates and unfolds these before they are guided to HslV for hydrolysis. The chain is ATP-dependent protease ATPase subunit HslU from Shouchella clausii (strain KSM-K16) (Alkalihalobacillus clausii).